A 314-amino-acid polypeptide reads, in one-letter code: DNA-directed RNA polymerase subunit alpha (314 aa).

Residues 1 to 228 are alpha N-terminal domain (alpha-NTD); that stretch reads MIEFEKPNIH…EHLAMFVDLT (228 aa). An alpha C-terminal domain (alpha-CTD) region spans residues 245–314; it reads KEKMLEMTIE…DLGVSFRQDD (70 aa).

This sequence belongs to the RNA polymerase alpha chain family. As to quaternary structure, homodimer. The RNAP catalytic core consists of 2 alpha, 1 beta, 1 beta' and 1 omega subunit. When a sigma factor is associated with the core the holoenzyme is formed, which can initiate transcription.

The enzyme catalyses RNA(n) + a ribonucleoside 5'-triphosphate = RNA(n+1) + diphosphate. Functionally, DNA-dependent RNA polymerase catalyzes the transcription of DNA into RNA using the four ribonucleoside triphosphates as substrates. This chain is DNA-directed RNA polymerase subunit alpha, found in Limosilactobacillus reuteri (strain DSM 20016) (Lactobacillus reuteri).